Here is a 260-residue protein sequence, read N- to C-terminus: Late transcription factor 1 (260 aa).

Belongs to the chordopoxvirinae VLTF-1 family. As to quaternary structure, interacts with the late transcription factors VLTF-2 and VLTF-3. Interacts with the late transcription elongation factor VLTF-4. Interacts with itself.

In terms of biological role, associates with RNA polymerase to initiate transcription from late gene promoters. The sequence is that of Late transcription factor 1 (OPG093) from Homo sapiens (Human).